Consider the following 668-residue polypeptide: Probable serine/threonine-protein kinase abkB (668 aa).

Disordered regions lie at residues 88–111 (YTNI…KTTA) and 132–162 (EVEE…DDNK). The span at 91 to 105 (IGGTSPNRQSVPENS) shows a compositional bias: polar residues. Residues 131-163 (KEVEEEIIDKNERGKEQEQENKQQKEQKDDNKS) are a coiled coil. Residues 138–162 (IDKNERGKEQEQENKQQKEQKDDNK) are compositionally biased toward basic and acidic residues. Residues 314 to 668 (DFERLPINSA…EIPSTYHHHH (355 aa)) form the Protein kinase domain. ATP is bound by residues 320-328 (INSASLAQV) and Lys-346. Asp-478 acts as the Proton acceptor in catalysis.

Belongs to the protein kinase superfamily. ADCK protein kinase family.

The protein is Probable serine/threonine-protein kinase abkB (abkB) of Dictyostelium discoideum (Social amoeba).